We begin with the raw amino-acid sequence, 264 residues long: Polyneuridine aldehyde esterase (264 aa).

Positions 1–6 are excised as a propeptide; sequence MHSAAN. The AB hydrolase-1 domain occupies 12–122; sequence HFVLVHGGCL…MMPDPNHSLT (111 aa). Residues serine 87, aspartate 216, and histidine 244 contribute to the active site. Position 87 (serine 87) interacts with 16-epivellosimine.

This sequence belongs to the AB hydrolase superfamily. As to quaternary structure, homodimer; homodimerizes in aqueous solutions at pH 7.0. As to expression, mainly expressed in roots and, to a lower level, in leaves.

It carries out the reaction polyneuridine aldehyde + H2O = 16-epivellosimine + methanol + CO2. The protein operates within alkaloid biosynthesis; ajmaline biosynthesis. With respect to regulation, inhibited by DEPC and HgCl(2). Functionally, hydrolase involved in the biosynthesis of ajmaline-type monoterpenoid indole alkaloids (MIAs) natural products, important plant-derived pharmaceuticals used in the therapy of heart disorders. Catalyzes the hydrolysis of polyneuridine aldehyde into epi-vellosimine, precursor of vomilenine, an intermediate chemical in the biosynthesis of ajmaline. This is Polyneuridine aldehyde esterase from Rauvolfia serpentina (Serpentine wood).